Reading from the N-terminus, the 144-residue chain is Large ribosomal subunit protein uL16 (144 aa).

It belongs to the universal ribosomal protein uL16 family. As to quaternary structure, part of the 50S ribosomal subunit.

Functionally, binds 23S rRNA and is also seen to make contacts with the A and possibly P site tRNAs. In Thermoanaerobacter pseudethanolicus (strain ATCC 33223 / 39E) (Clostridium thermohydrosulfuricum), this protein is Large ribosomal subunit protein uL16.